Consider the following 681-residue polypeptide: Sodium/glucose cotransporter 4 (681 aa).

Over 1 to 36 the chain is Extracellular; that stretch reads MSKELAAMGPGASGDGVRTETAPHIALDSRVGLHAY. The chain crosses the membrane as a helical span at residues 37 to 57; the sequence is DISVVVIYFVFVIAVGIWSSI. Over 58-75 the chain is Cytoplasmic; the sequence is RASRGTIGGYFLAGRSMS. Residues 76-98 form a helical membrane-spanning segment; sequence WWPIGASLMSSNVGSGLFIGLAG. The Extracellular segment spans residues 99-114; sequence TGAAGGLAVGGFEWNA. The chain crosses the membrane as a helical span at residues 115–135; that stretch reads TWLLLALGWVFVPVYIAAGVV. The Cytoplasmic portion of the chain corresponds to 136 to 157; the sequence is TMPQYLKKRFGGQRIQVYMSVL. Residues 158-178 form a helical membrane-spanning segment; sequence SLILYIFTKISTDIFSGALFI. Residues 179–190 are Extracellular-facing; the sequence is QMALGWNLYLST. The helical transmembrane segment at 191 to 211 threads the bilayer; sequence GILLVVTAVYTIAGGLMAVIY. At 212–217 the chain is on the cytoplasmic side; sequence TDALQT. Residues 218-238 traverse the membrane as a helical segment; sequence VIMVGGALVLMFLGFQDVGWY. At 239–275 the chain is on the extracellular side; it reads PGLEQRYRQAIPNVTVPNTTCHLPRPDAFHILRDPVS. Asparagine 251 carries an N-linked (GlcNAc...) asparagine glycan. A helical membrane pass occupies residues 276–296; that stretch reads GDIPWPGLIFGLTVLATWCWC. The Cytoplasmic segment spans residues 297-317; the sequence is TDQVIVQRSLSAKSLSHAKGG. Residues 318-338 form a helical membrane-spanning segment; it reads SVLGGYLKILPMFFIVMPGMI. At 339 to 383 the chain is on the extracellular side; sequence SRALFPDEVGCVDPDVCQRICGARVGCSNIAYPKLVMALMPVGLR. The chain crosses the membrane as a helical span at residues 384 to 406; that stretch reads GLMIAVIMAALMSSLTSIFNSSS. Topologically, residues 407–427 are cytoplasmic; sequence TLFTIDVWQRFRRKSTEQELM. The chain crosses the membrane as a helical span at residues 428 to 448; that stretch reads VVGRVFVVFLVVISILWIPII. Topologically, residues 449–459 are extracellular; it reads QSSNSGQLFDY. A helical membrane pass occupies residues 460–480; sequence IQAVTSYLAPPITALFLLAIF. Residues 481–487 lie on the Cytoplasmic side of the membrane; that stretch reads CKRVTEP. Residues 488 to 508 traverse the membrane as a helical segment; sequence GAFWGLVFGLGVGLLRMILEF. The Extracellular segment spans residues 509-530; it reads SYPAPACGEVDRRPAVLKDFHY. A helical membrane pass occupies residues 531 to 551; that stretch reads LYFAILLCGLTAIVIVIVSLC. The Cytoplasmic portion of the chain corresponds to 552-660; that stretch reads TTPIPEEQLT…SIEEEPLWRH (109 aa). Basic and acidic residues predominate over residues 579–591; the sequence is AHESTPEISERPA. The interval 579–614 is disordered; sequence AHESTPEISERPAGECPAGGGAAENSSLGQEQPEAP. A phosphoserine mark is found at serine 604 and serine 605. A helical membrane pass occupies residues 661–681; sequence VCNINAVLLLAINIFLWGYFA.

This sequence belongs to the sodium:solute symporter (SSF) (TC 2.A.21) family. In terms of tissue distribution, expressed in the small intestine, kidney and liver.

It localises to the cell membrane. It catalyses the reaction D-mannose(out) + n Na(+)(out) = D-mannose(in) + n Na(+)(in). Its function is as follows. Electrogenic Na(+)-coupled sugar symporter that may play a primary role in D-mannose and possibly D-fructose and D-glucose transport at the plasma membrane. Transporter activity is driven by a transmembrane Na(+) electrochemical gradient set by the Na(+)/K(+) pump. Exclusively recognizes sugar substrates having a pyranose ring with an axial hydroxyl group on carbon 2. The sequence is that of Sodium/glucose cotransporter 4 from Homo sapiens (Human).